Consider the following 184-residue polypeptide: ATP synthase subunit b, chloroplastic (184 aa).

A helical membrane pass occupies residues 27–49 (LATNPINLSVVLGVLIFFGKGVL).

This sequence belongs to the ATPase B chain family. F-type ATPases have 2 components, F(1) - the catalytic core - and F(0) - the membrane proton channel. F(1) has five subunits: alpha(3), beta(3), gamma(1), delta(1), epsilon(1). F(0) has four main subunits: a(1), b(1), b'(1) and c(10-14). The alpha and beta chains form an alternating ring which encloses part of the gamma chain. F(1) is attached to F(0) by a central stalk formed by the gamma and epsilon chains, while a peripheral stalk is formed by the delta, b and b' chains.

It localises to the plastid. The protein localises to the chloroplast thylakoid membrane. Functionally, f(1)F(0) ATP synthase produces ATP from ADP in the presence of a proton or sodium gradient. F-type ATPases consist of two structural domains, F(1) containing the extramembraneous catalytic core and F(0) containing the membrane proton channel, linked together by a central stalk and a peripheral stalk. During catalysis, ATP synthesis in the catalytic domain of F(1) is coupled via a rotary mechanism of the central stalk subunits to proton translocation. Component of the F(0) channel, it forms part of the peripheral stalk, linking F(1) to F(0). This Chloranthus spicatus (Chulantree) protein is ATP synthase subunit b, chloroplastic.